The sequence spans 372 residues: 3-dehydroquinate synthase (372 aa).

Residues 113-117 (GVIGD), 137-138 (TS), K150, K159, and 177-180 (TLKT) contribute to the NAD(+) site. Zn(2+)-binding residues include E192, H257, and H274.

The protein belongs to the sugar phosphate cyclases superfamily. Dehydroquinate synthase family. Co(2+) is required as a cofactor. It depends on Zn(2+) as a cofactor. Requires NAD(+) as cofactor.

It is found in the cytoplasm. The enzyme catalyses 7-phospho-2-dehydro-3-deoxy-D-arabino-heptonate = 3-dehydroquinate + phosphate. The protein operates within metabolic intermediate biosynthesis; chorismate biosynthesis; chorismate from D-erythrose 4-phosphate and phosphoenolpyruvate: step 2/7. Its function is as follows. Catalyzes the conversion of 3-deoxy-D-arabino-heptulosonate 7-phosphate (DAHP) to dehydroquinate (DHQ). The chain is 3-dehydroquinate synthase from Acaryochloris marina (strain MBIC 11017).